The following is a 179-amino-acid chain: Trypsin inhibitor (179 aa).

A Pyrrolidone carboxylic acid modification is found at Q1. 2 disulfides stabilise this stretch: C40–C85 and C132–C143.

This sequence belongs to the protease inhibitor I3 (leguminous Kunitz-type inhibitor) family. In terms of assembly, heterodimer of an alpha and a beta chain linked by a disulfide bond. Abundant in dry seeds.

Its subcellular location is the secreted. Its function is as follows. Inhibits trypsin, plasmin, human plasma kallikrein, chymotrypsin and factor XIIa activity. This is Trypsin inhibitor from Leucaena leucocephala (White popinac).